Reading from the N-terminus, the 639-residue chain is Chaperone protein DnaK (639 aa).

Position 197 is a phosphothreonine; by autocatalysis (threonine 197). Basic and acidic residues-rich tracts occupy residues 514–529 and 540–553; these read AEENAEADKDRKDLVE and GTEKSLEEHGEKVD. 2 disordered regions span residues 514-554 and 603-639; these read AEEN…KVDP and DKAEAAQDGAPEEEERGVDEDIVDADFEDLDDDRKRG. A compositionally biased stretch (acidic residues) spans 612 to 633; that stretch reads APEEEERGVDEDIVDADFEDLD.

It belongs to the heat shock protein 70 family.

Acts as a chaperone. The chain is Chaperone protein DnaK from Jannaschia sp. (strain CCS1).